Reading from the N-terminus, the 1077-residue chain is Protein hairless (1077 aa).

Disordered stretches follow at residues 14-75 (NRQT…SNNN), 97-141 (SSTS…HAKT), 269-322 (PSAA…SRPR), 340-368 (TLGRAALRTAARKRRRPHEPLTTSEDQQP), 408-504 (IEKP…PKAK), 533-876 (TTTS…PTSN), and 976-1077 (GQPA…LSKH). Composition is skewed to low complexity over residues 26 to 75 (NINS…SNNN), 115 to 130 (TTTPTTTTTPSSSSST), 269 to 286 (PSAATSATVTPTSAVTTA), and 293 to 308 (STSLSFSDDNSSIQSS). 2 stretches are compositionally biased toward basic and acidic residues: residues 408–439 (IEKPDTIKGEDDAERLEKEPKKAVSDDSESKE) and 449–459 (QPKDETVDVEM). The span at 596–607 (GSGGASSGGAGG) shows a compositional bias: gly residues. Low complexity predominate over residues 640-684 (PGSSSSSTSPATLSTQPTRLNSSYSIHSLLGGSSGSGSSSFSSSG). A compositionally biased stretch (polar residues) spans 704–713 (SMYQPSSSSY). Residues serine 720, serine 723, serine 746, and serine 753 each carry the phosphoserine modification. The span at 772-782 (PSTSGSASQDL) shows a compositional bias: polar residues. 2 stretches are compositionally biased toward low complexity: residues 783 to 798 (SPPRSSPASPATTPRT) and 811 to 829 (ASPSASSSSCPSPGDRSAS). Polar residues predominate over residues 837–846 (QQQPHLQRSS). The span at 865 to 876 (AGSPTSAPPTSN) shows a compositional bias: low complexity. Residues 984 to 995 (THPHLAHPHQHP) are compositionally biased toward basic residues. Composition is skewed to low complexity over residues 996–1012 (HPAALTTHHSPAHLATP) and 1023–1055 (SATSSHRTASTSPSSSSASASSSAATSGASSSA). Over residues 1056 to 1070 (MFHTSSLRNEQSSDL) the composition is skewed to polar residues.

In terms of tissue distribution, during embryogenesis expression is primarily in endo- and mesodermal cell layers. Ovary, embryos, larval and pupal imaginal disks.

Its subcellular location is the nucleus. In terms of biological role, is a potent antagonist of neurogenic gene activity during sensory organ development. The expression of distinct cell fates by the trichogen (shaft) / tormogen (socket) sister cell pair depends on the level of H activity. A certain threshold level of H activity is required, below which both sister cells adopt the tormogen fate. This chain is Protein hairless (H), found in Drosophila melanogaster (Fruit fly).